Reading from the N-terminus, the 296-residue chain is Diguanylate cyclase DgcZ (296 aa).

Zn(2+) is bound by residues histidine 22, cysteine 52, histidine 79, and histidine 83. Positions 157-289 (LNLYLMLLDI…GRNRCMFIDE (133 aa)) constitute a GGDEF domain. Mg(2+)-binding residues include aspartate 165 and isoleucine 166. Residues asparagine 173, histidine 178, aspartate 182, and 195 to 200 (WTRDYE) contribute to the substrate site. Glutamate 208 lines the Mg(2+) pocket. Glutamate 208 functions as the Proton acceptor in the catalytic mechanism. Lysine 215, arginine 224, and arginine 228 together coordinate substrate.

As to quaternary structure, homodimer. Requires Mg(2+) as cofactor.

The catalysed reaction is 2 GTP = 3',3'-c-di-GMP + 2 diphosphate. The protein operates within purine metabolism; 3',5'-cyclic di-GMP biosynthesis. With respect to regulation, allosterically regulated by zinc, which seems to regulate the activity of the catalytic GGDEF domains by impeding their mobility and thus preventing productive encounter of the two GTP substrates. Subject to product inhibition by c-di-GMP at a KI of 44 uM. Functionally, catalyzes the synthesis of cyclic-di-GMP (c-di-GMP) via the condensation of 2 GTP molecules. May act as a zinc sensor that controls, via c-di-GMP, post-translational events. Overexpression leads to a strong repression of swimming; swimming returnes to normal when residues 206-207 are both mutated to Ala. Overexpression also leads to a reduction in flagellar abundance and a 20-fold increase in c-di-GMP levels in vivo. Required for aminoglycoside-mediated induction of biofilm formation, it also plays a lesser role in biofilm production in response to other classes of translation inhibitors. The c-di-GMP produced by this enzyme up-regulates poly-GlcNAc production as well as the biofilm synthesis protein PgaD, although c-di-GMP is probably not the main inducing principle. C-di-GMP is a second messenger which controls cell surface-associated traits in bacteria. The chain is Diguanylate cyclase DgcZ from Escherichia coli (strain K12).